The following is a 96-amino-acid chain: Maintenance of carboxysome distribution protein B (96 aa).

Over residues 1-18 the composition is skewed to basic and acidic residues; sequence MTNLEDKLSASIKTENKD. The segment at 1 to 96 is disordered; sequence MTNLEDKLSA…STHPRRVWPD (96 aa). Over residues 59–74 the composition is skewed to low complexity; it reads ARATTTKPAVSKSSKP.

Monomer, associates with McdA:DNA. Interacts with shell components of the carboxysome.

Its subcellular location is the carboxysome. Its function is as follows. McdA and McdB together mediate carboxysome positioning on the nucleoid and to prevent their aggregation in the cell. Undergoes liquid-liquid phase separation at pH 7.0 in the presence of crowders polyethylene glycol or Ficoll. McdA is an ATPase that forms dynamic gradients on the nucleoid in response to adapter protein McdB, which associates with carboxysomes. The interplay between McdA gradients on the nucleoid and McdB-bound carboxysomes result in the equal spacing of Cbs along the cell length. Stimulates the ATPase activity of McdA, causing McdA to be released from DNA. Functionally, incorrect positioning (aggregation) of carboxysomes results in reduced CO(2) fixation by encapsulated form 1 ribulose-1,5-bisphosphate carboxylase (RuBisCO, cbbL/cbbS), which leads to slower growth. This Halothiobacillus neapolitanus (strain ATCC 23641 / c2) (Thiobacillus neapolitanus) protein is Maintenance of carboxysome distribution protein B.